We begin with the raw amino-acid sequence, 245 residues long: Heat shock transcription factor (245 aa).

A DNA-binding region spans residues 17–115 (KSGFVNRLYR…LISLITRDKS (99 aa)). Positions 130 to 169 (SLQYLASCNYKQQKEINDLKDRIKTLETKYATLYEIISNA) are involved in trimerization.

The protein belongs to the HSF family. As to quaternary structure, homotrimer. Homotrimerization increases the affinity of HSF1 to DNA.

Its subcellular location is the nucleus. DNA-binding transcription factor that specifically binds heat shock promoter elements (HSE) and activates transcription. This chain is Heat shock transcription factor, found in Enterocytozoon bieneusi (strain H348) (Microsporidian parasite).